A 968-amino-acid polypeptide reads, in one-letter code: Polycystin-2 (968 aa).

Positions 1–11 are enriched in polar residues; that stretch reads MVNSSRVQPQQ. Disordered stretches follow at residues 1–28 and 58–181; these read MVNS…DPGR and RIRQ…LPLE. Residues 1–219 are Cytoplasmic-facing; the sequence is MVNSSRVQPQ…STNREKYLKS (219 aa). Positions 62-83 are enriched in low complexity; it reads AAARDPPAGAAASPSPPLSSCS. Serine 76 and serine 80 each carry phosphoserine. Residues 95–107 show a composition bias toward acidic residues; sequence EAEEEEEEVEGEE. Low complexity predominate over residues 123–139; that stretch reads RRSAASSAVSSVGARSR. Arginine 137 carries the omega-N-methylarginine modification. Residues 220–241 form a helical membrane-spanning segment; it reads VLRELVTYLLFLIVLCILTYGM. Residues 242 to 468 lie on the Extracellular side of the membrane; the sequence is MSSNVYYYTR…PLKLIRYVTT (227 aa). N-linked (GlcNAc...) asparagine glycosylation is found at asparagine 299 and asparagine 305. N-linked (GlcNAc...) (complex) asparagine glycosylation occurs at asparagine 328. Cysteines 331 and 344 form a disulfide. N-linked (GlcNAc...) asparagine glycans are attached at residues asparagine 362 and asparagine 375. A helical membrane pass occupies residues 469–489; the sequence is FDFFLAACEIIFCFFIFYYVV. Topologically, residues 490 to 505 are cytoplasmic; that stretch reads EEILEIRIHKLHYFRS. A helical membrane pass occupies residues 506–526; the sequence is FWNCLDVVIVVLSVVAIGINI. The Extracellular portion of the chain corresponds to 527–552; sequence YRTSNVEVLLQFLEDQNTFPNFEHLA. The helical transmembrane segment at 553 to 573 threads the bilayer; the sequence is YWQIQFNNIAAVTVFFVWIKL. Glutamine 557 contributes to the cholesterol binding site. Over 574 to 597 the chain is Cytoplasmic; it reads FKFINFNRTMSQLSTTMSRCAKDL. The chain crosses the membrane as a helical span at residues 598–619; sequence FGFAIMFFIIFLAYAQLAYLVF. The Extracellular portion of the chain corresponds to 620 to 631; sequence GTQVDDFSTFQE. Positions 632–646 form an intramembrane region, pore-forming; that stretch reads CIFTQFRIILGDINF. Leucine 641 provides a ligand contact to Ca(2+). Residues 641–643 carry the Selectivity filter motif; that stretch reads LGD. Residues 647-654 lie on the Extracellular side of the membrane; the sequence is AEIEEANR. The helical transmembrane segment at 655–675 threads the bilayer; the sequence is VLGPIYFTTFVFFMFFILLNM. Over 676 to 968 the chain is Cytoplasmic; the sequence is FLAIINDTYS…GGNGSSNVHV (293 aa). The region spanning 750–785 is the EF-hand domain; it reads HTDAEIEAIFTKYDQDGDQELTEHEHQQMRDDLEKE. Ca(2+)-binding residues include aspartate 763, aspartate 765, aspartate 767, glutamate 769, and glutamate 774. The segment at 764–831 is disordered; it reads QDGDQELTEH…HSSRRRGSIS (68 aa). Residues 770–795 are compositionally biased toward basic and acidic residues; it reads LTEHEHQQMRDDLEKEREDLDLDHSS. Residues 796–807 show a composition bias toward low complexity; sequence LPRPMSSRSFPR. Phosphoserine occurs at positions 801, 808, 812, and 829. The linker stretch occupies residues 803–822; it reads RSFPRSLDDSEEDDDEDSGH. Positions 810–821 are important for interaction with PACS1 and PACS2; it reads DDSEEDDDEDSG. Residues 833 to 872 are a coiled coil; that stretch reads GVSYEEFQVLVRRVDRMEHSIGSIVSKIDAVIVKLEIMER. A disordered region spans residues 917–968; that stretch reads ESDDAASQISHGLGTPVGLNGQPRPRSSRPSSSQSTEGMEGAGGNGSSNVHV. Over residues 938 to 951 the composition is skewed to low complexity; it reads QPRPRSSRPSSSQS.

This sequence belongs to the polycystin family. In terms of assembly, homotetramer. Component of the heterotetrameric polycystin channel complex with PKD1; the tetramer contains one PKD1 chain and three PKD2 chains. Isoform 1 interacts with PKD1 while isoform 3 does not. Interacts with PKD1L1; probably forms a Ca(2+) channel. Interacts with CD2AP. Interacts with HAX1. Interacts with NEK8. Part of a complex containing AKAP5, ADCY5, ADCY6 and PDE4C. Interacts (via C-terminus) with TRPV4 (via C-terminus). Interacts (via C-terminal acidic region) with PACS1 and PACS2; these interactions retain the protein in the endoplasmic reticulum and prevent trafficking to the cell membrane. Interacts with TMEM33. Form a heterotetramer with TRPC1 with a 2:2 stoichiometry; has distinct channel properties separate from PKD2 or TRPC1 homomers alone. Interacts with TMEM120A; TMEM120A inhibits PKD2 channel activity through the physical association of PKD2 with TMEM120A. Interacts (via N-terminus) with RYR2; regulates RYR2 channel activity. Phosphorylated. Phosphorylation is important for protein function; a mutant that lacks the N-terminal phosphorylation sites cannot complement a zebrafish pkd2-deficient mutant. PKD-mediated phosphorylation at the C-terminus regulates its function in the release of Ca(2+) stores from the endoplasmic reticulum. Phosphorylation at Ser-812 regulates PKD2 trafficking. Phosphorylation at Ser-76 is required for PKD2 trafficking to or retention at the lateral plasma membrane. Phosphorylation at Ser-801, Ser-812 and Ser-829 regulates PKD2 channel activity. In terms of processing, N-glycosylated. The four subunits in a tetramer probably differ in the extent of glycosylation; simultaneous glycosylation of all experimentally validated sites would probably create steric hindrance. Thus, glycosylation at Asn-305 is not compatible with glycosylation at Asn-328; only one of these two residues is glycosylated at a given time. Post-translationally, sumoylated by SUMO1; sumoylation regulates PKD2 membrane recycling and is necessary for intravascular pressure-induced arterial contractility. As to expression, detected in fetal and adult kidney. Detected at the thick ascending limb of the loop of Henle, at distal tubules, including the distal convoluted tubule and cortical collecting tubules, with weak staining of the collecting duct. Detected on placenta syncytiotrophoblasts (at protein level). Strongly expressed in ovary, fetal and adult kidney, testis, and small intestine. Not detected in peripheral leukocytes.

The protein resides in the cell projection. Its subcellular location is the cilium membrane. It is found in the endoplasmic reticulum membrane. The protein localises to the cell membrane. It localises to the basolateral cell membrane. The protein resides in the cytoplasmic vesicle membrane. Its subcellular location is the golgi apparatus. It is found in the vesicle. The protein localises to the secreted. It localises to the extracellular exosome. The catalysed reaction is K(+)(in) = K(+)(out). It catalyses the reaction Na(+)(in) = Na(+)(out). It carries out the reaction Ca(2+)(in) = Ca(2+)(out). With respect to regulation, channel activity is regulated by phosphorylation. Channel activity is regulated by intracellular Ca(2+). At the endoplasmic reticulum membrane (ER), TMEM33 enhances its channel activity. TMEM120A inhibits the channel activity of PKD2, and mediates mechanosensitivity of the PKD2-TMEM120A channel complex. PKD1/PKD2 complex on the plasma membrane is activated by PKD1 N-terminus. In terms of biological role, forms a nonselective cation channel. Can function as a homotetrameric ion channel or can form heteromer with PKD1. Displays distinct function depending on its subcellular localization and regulation by its binding partners. In primary cilium functions as a cation channel, with a preference for monovalent cations over divalent cations that allows K(+), Na(+) and Ca(2+) influx, with low selectivity for Ca(2+). Involved in fluid-flow mechanosensation by the primary cilium in renal epithelium. In the endoplasmic reticulum, likely functions as a K(+) channel to facilitate Ca(2+) release. The heterotetrameric PKD1/PKD2 channel has higher Ca(2+) permeability than homomeric PKD2 channel and acts as a primarily Ca(2+)-permeable channel. Interacts with and acts as a regulator of a number of other channels, such as TRPV4, TRPC1, IP3R, RYR2, ultimately further affecting intracellular signaling, to modulate intracellular Ca(2+) signaling. Together with TRPV4, forms mechano- and thermosensitive channels in cilium. In cardiomyocytes, PKD2 modulates Ca(2+) release from stimulated RYR2 receptors through direct association. Also involved in left-right axis specification via its role in sensing nodal flow; forms a complex with PKD1L1 in cilia to facilitate flow detection in left-right patterning. Acts as a regulator of cilium length together with PKD1. Mediates systemic blood pressure and contributes to the myogenic response in cerebral arteries though vasoconstriction. This chain is Polycystin-2, found in Homo sapiens (Human).